Consider the following 130-residue polypeptide: uncharacterized protein (130 aa).

The disordered stretch occupies residues 23 to 130 (SHLRLLPTAN…GAHQLSSPSS (108 aa)). A compositionally biased stretch (polar residues) spans 30–45 (TANSPSGSNQPTNPNR).

This is an uncharacterized protein from Homo sapiens (Human).